Here is a 540-residue protein sequence, read N- to C-terminus: Coiled-coil domain-containing protein 116 (540 aa).

A coiled-coil region spans residues 79–102; it reads QVLDSLQTVVEQATECVATMKTEA. Residues 347–400 form a disordered region; sequence PGNSDLQPSSKASLPTDREARGETCYSPTSASSPKTSHRKSKDRRGSPSNAVQM. Composition is skewed to polar residues over residues 350–359 and 372–381; these read SDLQPSSKAS and YSPTSASSPK. Residue Ser-393 is modified to Phosphoserine.

The protein resides in the cytoplasm. Its subcellular location is the cytoskeleton. It localises to the microtubule organizing center. It is found in the centrosome. This is Coiled-coil domain-containing protein 116 (Ccdc116) from Rattus norvegicus (Rat).